The sequence spans 386 residues: MATTKSFLILFFMILATTSSTCAKLEEMVTVLSIDGGGIKGIIPAIILEFLEGQLQEVDNNKDARLADYFDVIGGTSTGGLLTAMITTPNENNRPFAAAKDIVPFYFEHGPHIFNYSGSIFGPRYDGKYLMQVLQEKLGETRVHQALTEVAISSFDIKTNKPVIFTKSNLAKSPELDAKMSDICYSTAAAPTYFPPHYFATNTSNGDKYEFNLVDGAVATVADPALLSVSVATRRAEEDPAFASIRSLNYKQLLLLSLGTGTNSEFDKTHTAQETAKWGALQWMLVIQQMTEAASSYMTDYYLSTVFQDLHSQNNYLRVQENALTGTTTKADDASEANMELLVQVGENLLKKPVSKDNPETYEEALKRFAKLLSDRKKFRANKASY.

The first 23 residues, Met-1–Ala-23, serve as a signal peptide directing secretion. Residues Leu-32–Val-229 form the PNPLA domain. A GXGXXG motif is present at residues Gly-36 to Gly-41. The GXSXG signature appears at Gly-75–Gly-79. Ser-77 (nucleophile) is an active-site residue. Asn-115 and Asn-202 each carry an N-linked (GlcNAc...) asparagine glycan. Asp-215 serves as the catalytic Proton acceptor. The short motif at Asp-215–Ala-217 is the DGA/G element.

It belongs to the patatin family. In terms of tissue distribution, tuber.

It localises to the vacuole. Probable lipolytic acyl hydrolase (LAH), an activity which is thought to be involved in the response of tubers to pathogens. This chain is Patatin-07, found in Solanum tuberosum (Potato).